The sequence spans 337 residues: MNAPSLPRLAMVLGDPAGIGPELIARLLADTEVREKAHIVLIADEAEMRRGMRIAGCEFPYRRIDALETLDFADATPLLHPWLSQGGDEFPRSEASAVGGRYSLETLALALELTRSGRTDAILFGPLNKTSLHMAGMDHSDELHWFAERLGFGGPFCEFNVLDDLWTSRVTSHVALAEVPGLLSQERVGEAIRLIDDALRRSGLARPRIGVCGLNPHNGDNGSFGREELDIIAPAVQKAREQGIAADGPYPADTIFLKVQGDARAFDAVVTMYHDQGQIAIKLMGFSRGVTVQGGLPIPIATPAHGTAFDIAGQGRADVGATRQAFEIACRMGRHKA.

A divalent metal cation is bound by residues histidine 173, histidine 217, and histidine 274.

This sequence belongs to the PdxA family. As to quaternary structure, homodimer. Zn(2+) is required as a cofactor. Mg(2+) serves as cofactor. The cofactor is Co(2+).

It is found in the cytoplasm. It carries out the reaction 4-(phosphooxy)-L-threonine + NAD(+) = 3-amino-2-oxopropyl phosphate + CO2 + NADH. It functions in the pathway cofactor biosynthesis; pyridoxine 5'-phosphate biosynthesis; pyridoxine 5'-phosphate from D-erythrose 4-phosphate: step 4/5. Functionally, catalyzes the NAD(P)-dependent oxidation of 4-(phosphooxy)-L-threonine (HTP) into 2-amino-3-oxo-4-(phosphooxy)butyric acid which spontaneously decarboxylates to form 3-amino-2-oxopropyl phosphate (AHAP). The polypeptide is Putative 4-hydroxythreonine-4-phosphate dehydrogenase 2 (Pseudomonas aeruginosa (strain ATCC 15692 / DSM 22644 / CIP 104116 / JCM 14847 / LMG 12228 / 1C / PRS 101 / PAO1)).